Reading from the N-terminus, the 940-residue chain is Isoleucine--tRNA ligase (940 aa).

The short motif at 58-68 (PYANGNIHIGH) is the 'HIGH' region element. Residue E563 participates in L-isoleucyl-5'-AMP binding. Positions 604 to 608 (KMSKS) match the 'KMSKS' region motif. An ATP-binding site is contributed by K607. Positions 903, 906, 923, and 926 each coordinate Zn(2+).

This sequence belongs to the class-I aminoacyl-tRNA synthetase family. IleS type 1 subfamily. As to quaternary structure, monomer. Zn(2+) serves as cofactor.

It is found in the cytoplasm. It carries out the reaction tRNA(Ile) + L-isoleucine + ATP = L-isoleucyl-tRNA(Ile) + AMP + diphosphate. Catalyzes the attachment of isoleucine to tRNA(Ile). As IleRS can inadvertently accommodate and process structurally similar amino acids such as valine, to avoid such errors it has two additional distinct tRNA(Ile)-dependent editing activities. One activity is designated as 'pretransfer' editing and involves the hydrolysis of activated Val-AMP. The other activity is designated 'posttransfer' editing and involves deacylation of mischarged Val-tRNA(Ile). The sequence is that of Isoleucine--tRNA ligase from Buchnera aphidicola subsp. Acyrthosiphon pisum (strain APS) (Acyrthosiphon pisum symbiotic bacterium).